The primary structure comprises 962 residues: Translation initiation factor IF-2 (962 aa).

Disordered regions lie at residues 122–263, 293–327, and 341–362; these read EVGV…EPAR, TEEVEVKEAPRKKRPRPEEFEKEAAERKAKGTRRK, and IAAQDDRGRLKGDKRRPFAKEP. Residues 156–173 show a composition bias toward low complexity; it reads AVEPQTVVPPVAAPAAEV. Residues 188 to 202 show a composition bias toward basic and acidic residues; that stretch reads KPPEEKETKVKHAEP. Residues 244–256 are compositionally biased toward basic residues; sequence RPKKAKKRRRKKV. Composition is skewed to basic and acidic residues over residues 308–327 and 344–362; these read RPEEFEKEAAERKAKGTRRK and QDDRGRLKGDKRRPFAKEP. Positions 455-624 constitute a tr-type G domain; it reads RRPPVITVMG…LLQAELLELK (170 aa). The segment at 464–471 is G1; that stretch reads GHVDHGKT. 464–471 lines the GTP pocket; it reads GHVDHGKT. A G2 region spans residues 489-493; that stretch reads GITQH. The interval 510–513 is G3; sequence DTPG. GTP is bound by residues 510–514 and 564–567; these read DTPGH and NKVD. Residues 564–567 are G4; the sequence is NKVD. Residues 600-602 are G5; that stretch reads SAK.

The protein belongs to the TRAFAC class translation factor GTPase superfamily. Classic translation factor GTPase family. IF-2 subfamily.

It localises to the cytoplasm. Its function is as follows. One of the essential components for the initiation of protein synthesis. Protects formylmethionyl-tRNA from spontaneous hydrolysis and promotes its binding to the 30S ribosomal subunits. Also involved in the hydrolysis of GTP during the formation of the 70S ribosomal complex. The sequence is that of Translation initiation factor IF-2 from Syntrophobacter fumaroxidans (strain DSM 10017 / MPOB).